Consider the following 267-residue polypeptide: 5'-nucleotidase SurE (267 aa).

Residues Asp14, Asp15, Ser45, and Asn100 each contribute to the a divalent metal cation site.

The protein belongs to the SurE nucleotidase family. A divalent metal cation is required as a cofactor.

The protein resides in the cytoplasm. The enzyme catalyses a ribonucleoside 5'-phosphate + H2O = a ribonucleoside + phosphate. Nucleotidase that shows phosphatase activity on nucleoside 5'-monophosphates. This is 5'-nucleotidase SurE from Methanosarcina barkeri (strain Fusaro / DSM 804).